We begin with the raw amino-acid sequence, 150 residues long: Large ribosomal subunit protein bL9 (150 aa).

This sequence belongs to the bacterial ribosomal protein bL9 family.

Binds to the 23S rRNA. This Hamiltonella defensa subsp. Acyrthosiphon pisum (strain 5AT) protein is Large ribosomal subunit protein bL9.